The chain runs to 256 residues: Thiazole synthase (256 aa).

The Schiff-base intermediate with DXP role is filled by Lys-96. 1-deoxy-D-xylulose 5-phosphate contacts are provided by residues Gly-157, 184–185, and 206–207; these read AG and NT.

This sequence belongs to the ThiG family. As to quaternary structure, homotetramer. Forms heterodimers with either ThiH or ThiS.

The protein localises to the cytoplasm. The catalysed reaction is [ThiS sulfur-carrier protein]-C-terminal-Gly-aminoethanethioate + 2-iminoacetate + 1-deoxy-D-xylulose 5-phosphate = [ThiS sulfur-carrier protein]-C-terminal Gly-Gly + 2-[(2R,5Z)-2-carboxy-4-methylthiazol-5(2H)-ylidene]ethyl phosphate + 2 H2O + H(+). It participates in cofactor biosynthesis; thiamine diphosphate biosynthesis. Catalyzes the rearrangement of 1-deoxy-D-xylulose 5-phosphate (DXP) to produce the thiazole phosphate moiety of thiamine. Sulfur is provided by the thiocarboxylate moiety of the carrier protein ThiS. In vitro, sulfur can be provided by H(2)S. The sequence is that of Thiazole synthase from Brucella abortus (strain S19).